The following is a 139-amino-acid chain: Low molecular weight protein-tyrosine-phosphatase PtpB (139 aa).

Cys-7 (nucleophile) is an active-site residue. Arg-13 is a catalytic residue. Asp-111 serves as the catalytic Proton donor.

Belongs to the low molecular weight phosphotyrosine protein phosphatase family.

It carries out the reaction O-phospho-L-tyrosyl-[protein] + H2O = L-tyrosyl-[protein] + phosphate. With respect to regulation, inhibited by N-ethylmaleimide and sodium orthovanadate. Its function is as follows. Dephosphorylates the phosphotyrosine-containing proteins. This is Low molecular weight protein-tyrosine-phosphatase PtpB (ptpB) from Staphylococcus aureus.